Consider the following 397-residue polypeptide: Purine ribonucleoside efflux pump NepI (397 aa).

Residues 1–21 (MNENIAEKFRADGVARPNWSA) lie on the Cytoplasmic side of the membrane. A helical membrane pass occupies residues 22 to 42 (VFAVAFCVACLITVEFLPVSL). Residues 43–54 (LTPMAQDLGISE) are Periplasmic-facing. Residues 55 to 75 (GVAGQSVTVTAFVAMFSSLFI) form a helical membrane-spanning segment. Over 76 to 85 (TQIIQATDRR) the chain is Cytoplasmic. The chain crosses the membrane as a helical span at residues 86–106 (YIVILFAVLLTASCLMVSFAN). Position 107 (serine 107) is a topological domain, periplasmic. The helical transmembrane segment at 108–128 (FTLLLLGRACLGLALGGFWAI) threads the bilayer. Topologically, residues 129–147 (SASLTMRLVPARTVPKALS) are cytoplasmic. Residues 148–168 (VIFGAVSIALVIAAPLGSFLG) form a helical membrane-spanning segment. The Periplasmic portion of the chain corresponds to 169 to 175 (GIIGWRN). A helical transmembrane segment spans residues 176-196 (VFNAAAVMGVLCVIWVVKSLP). Residues 197–215 (SLPGEPSHQKQNMFSLLQR) lie on the Cytoplasmic side of the membrane. A helical membrane pass occupies residues 216–236 (PGVMAGMIAIFMSFAGQFAFF). Residues 237 to 255 (TYIRPVYMNLAGFDVDGLT) are Periplasmic-facing. The chain crosses the membrane as a helical span at residues 256-276 (LVLLSFGIASFVGTSFSSYVL). Residues 277-281 (KRSVK) lie on the Cytoplasmic side of the membrane. Residues 282-302 (LALAGAPLLLALSALTLIVWG) traverse the membrane as a helical segment. The Periplasmic segment spans residues 303–305 (SDK). A helical transmembrane segment spans residues 306–326 (TVAAAIAIIWGLAFALVPVGW). Residues 327–343 (STWITRSLADQAEKAGS) lie on the Cytoplasmic side of the membrane. The chain crosses the membrane as a helical span at residues 344-364 (IQVAVIQLANTCGAAVGGYAL). Topologically, residues 365-366 (DN) are periplasmic. A helical membrane pass occupies residues 367–387 (FGLLSPLALSGGLMLLTALVV). Topologically, residues 388-397 (AAKVRITPMS) are cytoplasmic.

Belongs to the major facilitator superfamily. DHA1 family. NepI (TC 2.A.1.2.26) subfamily.

The protein localises to the cell inner membrane. It carries out the reaction inosine(in) + H(+)(out) = inosine(out) + H(+)(in). The catalysed reaction is guanosine(in) + H(+)(out) = guanosine(out) + H(+)(in). In terms of biological role, involved in the efflux of purine ribonucleosides, such as inosine and guanosine. The chain is Purine ribonucleoside efflux pump NepI from Salmonella paratyphi A (strain ATCC 9150 / SARB42).